A 628-amino-acid polypeptide reads, in one-letter code: Leucine-rich repeat and fibronectin type-III domain-containing protein 3 (628 aa).

The first 16 residues, 1–16 (MAILPLLLCLLPLAPA), serve as a signal peptide directing secretion. The Extracellular segment spans residues 17 to 539 (SSPPQSATPS…PHAPFLGGTM (523 aa)). The region spanning 19–59 (PPQSATPSPCPRRCRCQTQSLPLSVLCPGAGLLFVPPSLDR) is the LRRNT domain. LRR repeat units lie at residues 60-83 (RAAE…ANMT), 84-105 (GLLH…AFAD), 108-129 (ALRA…QLRG), 132-153 (NLRH…ALDD), 157-178 (TLED…ALGR), 181-202 (NVNT…AFSR), and 205-226 (KLAR…PLFS). An N-linked (GlcNAc...) asparagine glycan is attached at Asn-81. The LRRCT domain occupies 249–295 (NPLHCNCELVWLRRLAREDDLEACASPPALGGRYFWAVGEEEFVCEP). The 88-residue stretch at 295–382 (PPVVTHRSPP…GEATAAVELT (88 aa)) folds into the Ig-like domain. Cys-317 and Cys-366 form a disulfide bridge. Asn-339, Asn-348, and Asn-393 each carry an N-linked (GlcNAc...) asparagine glycan. The interval 382–430 (TVGPPPPPQLANSTSCDPPRDGDPDALTPPSAASASAKVADTGPPTDRG) is disordered. The segment covering 406–422 (DALTPPSAASASAKVAD) has biased composition (low complexity). The Fibronectin type-III domain occupies 425-523 (PPTDRGVQVT…GCARFSTEPA (99 aa)). The N-linked (GlcNAc...) asparagine glycan is linked to Asn-462. Residues 540–560 (IIALGGVIVASVLVFIFVLLM) traverse the membrane as a helical segment. At 561–628 (RYKVHGGQPP…WGPGHEPVGP (68 aa)) the chain is on the cytoplasmic side.

The protein belongs to the LRFN family. As to quaternary structure, can form heteromeric complexes with LRFN1, LRFN2, LRFN4 and LRFN5. Able to form homomeric complexes across cell junctions, between adjacent cells. Does not interact with DLG4. In terms of processing, N-glycosylated.

Its subcellular location is the cell membrane. The protein resides in the cell projection. It is found in the axon. It localises to the dendrite. The protein localises to the synapse. Its subcellular location is the presynaptic cell membrane. The protein resides in the postsynaptic cell membrane. In terms of biological role, cell adhesion molecule that mediates homophilic cell-cell adhesion in a Ca(2+)-independent manner. Promotes neurite outgrowth in hippocampal neurons. This is Leucine-rich repeat and fibronectin type-III domain-containing protein 3 (LRFN3) from Homo sapiens (Human).